We begin with the raw amino-acid sequence, 435 residues long: Tol-Pal system protein TolB (435 aa).

The first 28 residues, 1-28 (MTKCSFFRAILVAVGLMTAAVFATPANA), serve as a signal peptide directing secretion. Residues 288-310 (STAAIDTSPSYSPDGARVSFESD) are disordered.

It belongs to the TolB family. As to quaternary structure, the Tol-Pal system is composed of five core proteins: the inner membrane proteins TolA, TolQ and TolR, the periplasmic protein TolB and the outer membrane protein Pal. They form a network linking the inner and outer membranes and the peptidoglycan layer.

It localises to the periplasm. Functionally, part of the Tol-Pal system, which plays a role in outer membrane invagination during cell division and is important for maintaining outer membrane integrity. This is Tol-Pal system protein TolB from Rhizobium johnstonii (strain DSM 114642 / LMG 32736 / 3841) (Rhizobium leguminosarum bv. viciae).